The primary structure comprises 464 residues: Keratin, type I cytoskeletal 28 (464 aa).

Residues 1-85 (MSLQFSNGSR…GSEGGLLSGN (85 aa)) are head. The tract at residues 86–121 (EKVTMQNLNDRLASYLDNVRALEEANAELERKIKGW) is coil 1A. One can recognise an IF rod domain in the interval 86–401 (EKVTMQNLND…RLIDGDGNSC (316 aa)). Residues 122 to 143 (YEKYGPGSCRGLDHDYSRYHLT) form a linker 1 region. The segment at 144–235 (IEDLKNKIIS…KNHEEEMKAL (92 aa)) is coil 1B. A linker 12 region spans residues 236 to 258 (QCAAGGNVNVEMNAAPGVDLAVL). Residues 259–397 (LNNMRAEYEA…ETYCRLIDGD (139 aa)) form a coil 2 region. The tract at residues 398–464 (GNSCSKSKGF…NGKTEQRVPF (67 aa)) is tail. The disordered stretch occupies residues 443–464 (IHSIEEKTSKMTNGKTEQRVPF).

This sequence belongs to the intermediate filament family. Heterotetramer of two type I and two type II keratins. In terms of tissue distribution, strongly expressed in skin and scalp, and weak expression observed in thymus. In the hair follicle, expressed in Henle layer, Huxley layer and in the irs cuticle. Expression extends from the bulb region up to the point of differentiation into the three layers. Also present in the medulla of beard hair (at protein level).

Its subcellular location is the cytoplasm. Functionally, essential for the proper assembly of types I and II keratin protein complexes and the formation of keratin intermediate filaments in the inner root sheath (irs). The chain is Keratin, type I cytoskeletal 28 from Homo sapiens (Human).